Reading from the N-terminus, the 253-residue chain is Probable transcriptional regulatory protein Mmar10_2433 (253 aa).

This sequence belongs to the TACO1 family.

Its subcellular location is the cytoplasm. The polypeptide is Probable transcriptional regulatory protein Mmar10_2433 (Maricaulis maris (strain MCS10) (Caulobacter maris)).